A 448-amino-acid polypeptide reads, in one-letter code: Amino-acid acetyltransferase (448 aa).

The N-acetyltransferase domain occupies 295–433 (EQIRRANIND…KQVLYNYQRR (139 aa)).

Belongs to the acetyltransferase family. ArgA subfamily. Homohexamer.

It is found in the cytoplasm. It carries out the reaction L-glutamate + acetyl-CoA = N-acetyl-L-glutamate + CoA + H(+). The protein operates within amino-acid biosynthesis; L-arginine biosynthesis; N(2)-acetyl-L-ornithine from L-glutamate: step 1/4. The sequence is that of Amino-acid acetyltransferase from Photorhabdus laumondii subsp. laumondii (strain DSM 15139 / CIP 105565 / TT01) (Photorhabdus luminescens subsp. laumondii).